The following is a 322-amino-acid chain: tRNA U34 carboxymethyltransferase (322 aa).

Residues K91, W105, K110, G129, 179–180, M195, Y199, and R314 each bind carboxy-S-adenosyl-L-methionine; that span reads LE.

It belongs to the class I-like SAM-binding methyltransferase superfamily. CmoB family. In terms of assembly, homotetramer.

It catalyses the reaction carboxy-S-adenosyl-L-methionine + 5-hydroxyuridine(34) in tRNA = 5-carboxymethoxyuridine(34) in tRNA + S-adenosyl-L-homocysteine + H(+). Catalyzes carboxymethyl transfer from carboxy-S-adenosyl-L-methionine (Cx-SAM) to 5-hydroxyuridine (ho5U) to form 5-carboxymethoxyuridine (cmo5U) at position 34 in tRNAs. The chain is tRNA U34 carboxymethyltransferase from Pseudomonas paraeruginosa (strain DSM 24068 / PA7) (Pseudomonas aeruginosa (strain PA7)).